The following is a 396-amino-acid chain: MTQHDNDPAWPDHKPTALLVLADGTVLEGFGLGAEGHAVGEVCFNTAMTGYEEILTDPSYAGQLITFTFPHIGNVGTNEEDIETVNMAATPGARGVILRTAITDPSNYRATKHLDAWLKARGIIGLSGIDTRALTALIRSKGMPNAVIAHARNGEFDLHGLKEEAREWPGLEGMDLVPMVTSGQRFTWDETPWLWDKGFGQQDKTEFNVVAIDYGIKRNILRLLAGVGCKVTVVPATTSAEDILAMKPDGVFLSNGPGDPAATGKYAVPVIRDVIKSGTPTFGICLGHQMLGLAVGAKTKKMHQGHHGANHPVKDETTGKVEITSMNHGFAVDEKTLPKGATQTHISLFDGSNCGIQLDGKPVFSVQYHPEASPGPRDSHYLFQRFAELMRQKKSA.

The tract at residues 1–204 is CPSase; the sequence is MTQHDNDPAW…WDKGFGQQDK (204 aa). Positions 59, 256, and 258 each coordinate L-glutamine. The region spanning 208–396 is the Glutamine amidotransferase type-1 domain; sequence NVVAIDYGIK…AELMRQKKSA (189 aa). Residue Cys285 is the Nucleophile of the active site. Residues Leu286, Gln289, Asn327, Gly329, and Phe330 each contribute to the L-glutamine site. Catalysis depends on residues His369 and Glu371.

It belongs to the CarA family. As to quaternary structure, composed of two chains; the small (or glutamine) chain promotes the hydrolysis of glutamine to ammonia, which is used by the large (or ammonia) chain to synthesize carbamoyl phosphate. Tetramer of heterodimers (alpha,beta)4.

The enzyme catalyses hydrogencarbonate + L-glutamine + 2 ATP + H2O = carbamoyl phosphate + L-glutamate + 2 ADP + phosphate + 2 H(+). It carries out the reaction L-glutamine + H2O = L-glutamate + NH4(+). It participates in amino-acid biosynthesis; L-arginine biosynthesis; carbamoyl phosphate from bicarbonate: step 1/1. It functions in the pathway pyrimidine metabolism; UMP biosynthesis via de novo pathway; (S)-dihydroorotate from bicarbonate: step 1/3. Functionally, small subunit of the glutamine-dependent carbamoyl phosphate synthetase (CPSase). CPSase catalyzes the formation of carbamoyl phosphate from the ammonia moiety of glutamine, carbonate, and phosphate donated by ATP, constituting the first step of 2 biosynthetic pathways, one leading to arginine and/or urea and the other to pyrimidine nucleotides. The small subunit (glutamine amidotransferase) binds and cleaves glutamine to supply the large subunit with the substrate ammonia. This chain is Carbamoyl phosphate synthase small chain, found in Bradyrhizobium diazoefficiens (strain JCM 10833 / BCRC 13528 / IAM 13628 / NBRC 14792 / USDA 110).